We begin with the raw amino-acid sequence, 546 residues long: Glucose-6-phosphate isomerase (546 aa).

Catalysis depends on Glu353, which acts as the Proton donor. Active-site residues include His384 and Lys512.

It belongs to the GPI family.

The protein resides in the cytoplasm. It carries out the reaction alpha-D-glucose 6-phosphate = beta-D-fructose 6-phosphate. It participates in carbohydrate biosynthesis; gluconeogenesis. Its pathway is carbohydrate degradation; glycolysis; D-glyceraldehyde 3-phosphate and glycerone phosphate from D-glucose: step 2/4. Functionally, catalyzes the reversible isomerization of glucose-6-phosphate to fructose-6-phosphate. This chain is Glucose-6-phosphate isomerase, found in Actinobacillus pleuropneumoniae serotype 5b (strain L20).